The chain runs to 114 residues: Pro-FMRFamide-related neuropeptide FF (114 aa).

Positions 1–21 (MDSKWAALLLLLLLLLNWGHT) are cleaved as a signal peptide. Positions 22–69 (EEAGSWGEDQVFAGEDKGPHPPQYAHIPDRIQTPGSLFRVLLQAMDTP) are excised as a propeptide. Phenylalanine 82 is modified (phenylalanine amide). Residues 85–100 (SAWGSWSKEQLNPQAR) constitute a propeptide that is removed on maturation. Phenylalanine 111 is subject to Phenylalanine amide.

Belongs to the FARP (FMRFamide related peptide) family.

The protein resides in the secreted. Morphine modulating peptides. Have wide-ranging physiologic effects, including the modulation of morphine-induced analgesia, elevation of arterial blood pressure, and increased somatostatin secretion from the pancreas. Neuropeptide FF potentiates and sensitizes ASIC1 and ASIC3 channels. This chain is Pro-FMRFamide-related neuropeptide FF (Npff), found in Mus musculus (Mouse).